Reading from the N-terminus, the 428-residue chain is CinA-like protein (428 aa).

This sequence belongs to the CinA family.

In Mycobacterium leprae (strain TN), this protein is CinA-like protein.